Reading from the N-terminus, the 346-residue chain is Rhomboid protein 1, mitochondrial (346 aa).

A mitochondrion-targeting transit peptide spans 1 to 73; it reads MSGVSSVMLG…RFFSQTSILK (73 aa). The next 6 membrane-spanning stretches (helical) occupy residues 109–129, 145–165, 203–223, 246–266, 275–295, and 308–328; these read SMTI…PYLF, LVYA…LPKC, MLAL…SNFF, LAIV…LGCF, ILLF…ASVA, and FDYA…WYIS. Catalysis depends on serine 256, which acts as the Nucleophile. Histidine 313 is a catalytic residue.

The protein belongs to the peptidase S54 family.

It is found in the mitochondrion inner membrane. The catalysed reaction is Cleaves type-1 transmembrane domains using a catalytic dyad composed of serine and histidine that are contributed by different transmembrane domains.. Functionally, mitochondrial rhomboid serine protease processing the mitochondrial membrane fusion regulator MGM1, and the cytochrome c peroxidase (CCP1). Required for TIM11 stability, ATP synthase complex assembly, mitochondrial morphology, cytochrome c (CYC1) storage and mitochondrial genome maintenance. This is Rhomboid protein 1, mitochondrial (PCP1) from Saccharomyces cerevisiae (strain ATCC 204508 / S288c) (Baker's yeast).